The sequence spans 274 residues: MSVRKLKPITPGQRFRVVNGYDAITTDKPERSLIAPIKNSGGRNSQGKMTMRYTGGGHKQRYRIIDFKRTKDGIPATVKSIEYDPNRTAFIALLAYADGEKTYIIAQNGLKVGQKLVSGPESQPEIGNTLPLSRIPLGTVISCIELRPGQGAVIARSAGTFAQLMARDGKYATIKMPSGETRLILLTCSATIGAVSNSDHQLVVSGKAGRTRWLGRRPRTRPVAMNPVDHPMGGGEGRSSGGHPRSRNGLPAKGYRTRSKKNPSNKYIVERRKK.

Positions 214–274 (LGRRPRTRPV…NKYIVERRKK (61 aa)) are disordered.

Belongs to the universal ribosomal protein uL2 family. Part of the 50S ribosomal subunit. Forms a bridge to the 30S subunit in the 70S ribosome.

Its function is as follows. One of the primary rRNA binding proteins. Required for association of the 30S and 50S subunits to form the 70S ribosome, for tRNA binding and peptide bond formation. It has been suggested to have peptidyltransferase activity; this is somewhat controversial. Makes several contacts with the 16S rRNA in the 70S ribosome. The polypeptide is Large ribosomal subunit protein uL2 (Flavobacterium johnsoniae (strain ATCC 17061 / DSM 2064 / JCM 8514 / BCRC 14874 / CCUG 350202 / NBRC 14942 / NCIMB 11054 / UW101) (Cytophaga johnsonae)).